Consider the following 180-residue polypeptide: 3-phenylpropionate/cinnamic acid dioxygenase subunit beta (180 aa).

It belongs to the bacterial ring-hydroxylating dioxygenase beta subunit family. As to quaternary structure, this dioxygenase system consists of four proteins: the two subunits of the hydroxylase component (HcaE and HcaF), a ferredoxin (HcaC) and a ferredoxin reductase (HcaD).

It catalyses the reaction 3-phenylpropanoate + NADH + O2 + H(+) = 3-(cis-5,6-dihydroxycyclohexa-1,3-dien-1-yl)propanoate + NAD(+). It carries out the reaction (E)-cinnamate + NADH + O2 + H(+) = (2E)-3-(cis-5,6-dihydroxycyclohexa-1,3-dien-1-yl)prop-2-enoate + NAD(+). It functions in the pathway aromatic compound metabolism; 3-phenylpropanoate degradation. Part of the multicomponent 3-phenylpropionate dioxygenase. Converts 3-phenylpropionic acid (PP) and cinnamic acid (CI) into 3-phenylpropionate-dihydrodiol (PP-dihydrodiol) and cinnamic acid-dihydrodiol (CI-dihydrodiol), respectively. The protein is 3-phenylpropionate/cinnamic acid dioxygenase subunit beta of Photorhabdus laumondii subsp. laumondii (strain DSM 15139 / CIP 105565 / TT01) (Photorhabdus luminescens subsp. laumondii).